The following is a 152-amino-acid chain: UPF0225 protein YchJ (152 aa).

The protein belongs to the UPF0225 family.

This chain is UPF0225 protein YchJ, found in Escherichia coli O7:K1 (strain IAI39 / ExPEC).